A 1459-amino-acid polypeptide reads, in one-letter code: Peroxisomal ATPase PEX6 (1459 aa).

The span at 1 to 13 (MDFEQYGQSSQQP) shows a compositional bias: low complexity. Disordered regions lie at residues 1–28 (MDFEQYGQSSQQPRQRRRRAGKRRLNNK) and 316–410 (AAED…RPGR). Basic residues predominate over residues 14–26 (RQRRRRAGKRRLN). Residues 327–348 (EMEVTSAAEESETEGSAGSMSD) are compositionally biased toward low complexity. Polar residues predominate over residues 396–405 (SVASNFTSAT). Residue 1070-1077 (GPPGTGKT) participates in ATP binding. The segment at 1357-1459 (IPEEAPTING…HLRNPMEEVE (103 aa)) is disordered. Over residues 1391-1401 (STSGQSTTSSK) the composition is skewed to low complexity. Residues 1402-1413 (GKGKSVSKKGKS) are compositionally biased toward basic residues. The segment covering 1421–1443 (GSVDGDDEDMADANSKEDEDEDD) has biased composition (acidic residues). Residues 1444 to 1459 (YVVRTDHLRNPMEEVE) are compositionally biased toward basic and acidic residues.

It belongs to the AAA ATPase family. As to quaternary structure, interacts with PEX1; forming the PEX1-PEX6 AAA ATPase complex, which is composed of a heterohexamer formed by a trimer of PEX1-PEX6 dimers.

The protein resides in the cytoplasm. It is found in the cytosol. The protein localises to the peroxisome membrane. The enzyme catalyses ATP + H2O = ADP + phosphate + H(+). Its function is as follows. Component of the PEX1-PEX6 AAA ATPase complex, a protein dislocase complex that mediates the ATP-dependent extraction of the PEX5 receptor from peroxisomal membranes, an essential step for PEX5 recycling. Specifically recognizes PEX5 monoubiquitinated at 'Cys-6', and pulls it out of the peroxisome lumen through the PEX2-PEX10-PEX12 retrotranslocation channel. Extraction by the PEX1-PEX6 AAA ATPase complex is accompanied by unfolding of the TPR repeats and release of bound cargo from PEX5. The chain is Peroxisomal ATPase PEX6 (pex6) from Penicillium chrysogenum (Penicillium notatum).